Reading from the N-terminus, the 328-residue chain is Cytochrome c biogenesis protein CcsA (328 aa).

Transmembrane regions (helical) follow at residues 13 to 33 (ISFS…LVNL), 46 to 66 (GIVI…IYSG), 73 to 93 (LYES…VSYF), 101 to 121 (LNAI…SGLL), 146 to 166 (MILG…LLVI), 234 to 254 (IISL…VWAN), 263 to 283 (WDPK…YLHI), and 295 to 315 (AIVA…VNLL).

The protein belongs to the CcmF/CycK/Ccl1/NrfE/CcsA family. As to quaternary structure, may interact with Ccs1.

It is found in the plastid. It localises to the chloroplast thylakoid membrane. Functionally, required during biogenesis of c-type cytochromes (cytochrome c6 and cytochrome f) at the step of heme attachment. The chain is Cytochrome c biogenesis protein CcsA from Nasturtium officinale (Watercress).